The following is a 453-amino-acid chain: Pre-mRNA-splicing factor prp46 (453 aa).

Over residues 62–71 the composition is skewed to low complexity; it reads EKQAKAAAAG. The segment at 62 to 129 is disordered; it reads EKQAKAAAAG…PSATRQQRPD (68 aa). 7 WD repeats span residues 142–181, 184–223, 226–265, 268–309, 311–350, 351–389, and 400–439; these read GHLG…LRLT, GHIS…VIRH, GHLS…NIHV, GHKG…GVLT, HKKG…QNFE, GHNA…KFQS, and DAEA…TPES. The tract at residues 432-453 is disordered; sequence DDEATPESHPVTWAPTLGRQRY.

Belongs to the WD repeat PRL1/PRL2 family. Associated with the spliceosome.

The protein resides in the cytoplasm. It is found in the nucleus. Its function is as follows. Involved in pre-mRNA splicing and required for cell cycle progression at G2/M. In Aspergillus fumigatus (strain ATCC MYA-4609 / CBS 101355 / FGSC A1100 / Af293) (Neosartorya fumigata), this protein is Pre-mRNA-splicing factor prp46 (prp46).